Consider the following 1366-residue polypeptide: DNA-directed RNA polymerase subunit beta'' (1366 aa).

Residues Cys-220, Cys-290, Cys-297, and Cys-300 each contribute to the Zn(2+) site.

Belongs to the RNA polymerase beta' chain family. RpoC2 subfamily. In terms of assembly, in plastids the minimal PEP RNA polymerase catalytic core is composed of four subunits: alpha, beta, beta', and beta''. When a (nuclear-encoded) sigma factor is associated with the core the holoenzyme is formed, which can initiate transcription. The cofactor is Zn(2+).

It localises to the plastid. Its subcellular location is the chloroplast. It catalyses the reaction RNA(n) + a ribonucleoside 5'-triphosphate = RNA(n+1) + diphosphate. In terms of biological role, DNA-dependent RNA polymerase catalyzes the transcription of DNA into RNA using the four ribonucleoside triphosphates as substrates. The sequence is that of DNA-directed RNA polymerase subunit beta'' from Lemna minor (Common duckweed).